Here is a 445-residue protein sequence, read N- to C-terminus: Neuropeptide Y receptor type 5 (445 aa).

At 1–42 (MDLELDEYYNKTLATENNTAATRNSDFPVWDDYKSSVDDLQY) the chain is on the extracellular side. N-linked (GlcNAc...) asparagine glycosylation is found at Asn10 and Asn17. A helical transmembrane segment spans residues 43–63 (FLIGLYTFVSLLGFMGNLLIL). At 64-77 (MALMKKRNQKTTVN) the chain is on the cytoplasmic side. Residues 78–98 (FLIGNLAFSDILVVLFCSPFT) traverse the membrane as a helical segment. Over 99-117 (LTSVLLDQWMFGKVMCHIM) the chain is Extracellular. Cys114 and Cys198 are oxidised to a cystine. Residues 118-138 (PFLQCVSVLVSTLILISIAIV) form a helical membrane-spanning segment. Residues 139–156 (RYHMIKHPISNNLTANHG) are Cytoplasmic-facing. A helical transmembrane segment spans residues 157-177 (YFLIATVWTLGFAICSPLPVF). Residues 178–208 (HSLVELQETFGSALLSSRYLCVESWPSDSYR) lie on the Extracellular side of the membrane. A helical transmembrane segment spans residues 209-229 (IAFTISLLLVQYILPLVCLTV). At 230–369 (SHTSVCRSIS…KKRSRSVFYR (140 aa)) the chain is on the cytoplasmic side. The chain crosses the membrane as a helical span at residues 370-390 (LTILILVFAVSWMPLHLFHVV). At 391–407 (TDFNDNLISNRHFKLVY) the chain is on the extracellular side. Residues 408–428 (CICHLLGMMSCCLNPILYGFL) traverse the membrane as a helical segment. Topologically, residues 429–445 (NNGIKADLVSLIHCLHM) are cytoplasmic. Residue Cys442 is the site of S-palmitoyl cysteine attachment.

It belongs to the G-protein coupled receptor 1 family. As to expression, brain; hypothalamus.

It localises to the cell membrane. Functionally, receptor for neuropeptide Y and peptide YY. The activity of this receptor is mediated by G proteins that inhibit adenylate cyclase activity. Seems to be associated with food intake. Could be involved in feeding disorders. This chain is Neuropeptide Y receptor type 5 (NPY5R), found in Homo sapiens (Human).